Consider the following 490-residue polypeptide: Patellin-3 (490 aa).

The span at 1-17 (MAEEPTTTTLVTPEKLP) shows a compositional bias: low complexity. The tract at residues 1–121 (MAEEPTTTTL…ESSKLSDLSN (121 aa)) is disordered. The residue at position 2 (alanine 2) is an N-acetylalanine. The span at 19–33 (PSLTPSEVSESTQDA) shows a compositional bias: polar residues. Residues 46-56 (ETNPPETADTT) show a composition bias toward low complexity. Composition is skewed to basic and acidic residues over residues 57–69 (TKPE…EHHP) and 79–100 (STEK…EKKS). A Phosphoserine modification is found at serine 108. Residues 109–121 (FKEESSKLSDLSN) are compositionally biased toward basic and acidic residues. Residue lysine 193 forms a Glycyl lysine isopeptide (Lys-Gly) (interchain with G-Cter in ubiquitin) linkage. The region spanning 202–377 (EEDLVDDLDK…QYGGLSVDPC (176 aa)) is the CRAL-TRIO domain. The GOLD domain occupies 353 to 487 (AETLFKYISP…KKKLVYRFNV (135 aa)).

The protein belongs to the patellin family.

It localises to the membrane. The protein resides in the cytoplasm. Its function is as follows. Carrier protein that may be involved in membrane-trafficking events associated with cell plate formation during cytokinesis. Binds to some hydrophobic molecules such as phosphoinositides and promotes their transfer between the different cellular sites. The sequence is that of Patellin-3 (PATL3) from Arabidopsis thaliana (Mouse-ear cress).